Reading from the N-terminus, the 311-residue chain is Methionyl-tRNA formyltransferase (311 aa).

112-115 (SLLP) provides a ligand contact to (6S)-5,6,7,8-tetrahydrofolate.

Belongs to the Fmt family.

It carries out the reaction L-methionyl-tRNA(fMet) + (6R)-10-formyltetrahydrofolate = N-formyl-L-methionyl-tRNA(fMet) + (6S)-5,6,7,8-tetrahydrofolate + H(+). In terms of biological role, attaches a formyl group to the free amino group of methionyl-tRNA(fMet). The formyl group appears to play a dual role in the initiator identity of N-formylmethionyl-tRNA by promoting its recognition by IF2 and preventing the misappropriation of this tRNA by the elongation apparatus. In Rhizobium meliloti (strain 1021) (Ensifer meliloti), this protein is Methionyl-tRNA formyltransferase.